The chain runs to 428 residues: Oxysterol-binding protein 9 (428 aa).

The span at 1-11 shows a compositional bias: polar residues; the sequence is MTEVQSITTSG. 2 disordered regions span residues 1–32 and 396–428; these read MTEVQSITTSGEIKMPLSPSSSSSSISSSTTN and ALIEDNQRKQKKEKDEKLKKDEKLKKEDKKNQK. Residues 18–32 are compositionally biased toward low complexity; that stretch reads SPSSSSSSISSSTTN. Residues 389–422 are a coiled coil; sequence EEAKKYKALIEDNQRKQKKEKDEKLKKDEKLKKE.

Belongs to the OSBP family.

The protein is Oxysterol-binding protein 9 (osbI) of Dictyostelium discoideum (Social amoeba).